The primary structure comprises 548 residues: ATP synthase subunit alpha (548 aa).

Residue 172–179 (GDRKTGKT) participates in ATP binding.

It belongs to the ATPase alpha/beta chains family. In terms of assembly, F-type ATPases have 2 components, CF(1) - the catalytic core - and CF(0) - the membrane proton channel. CF(1) has five subunits: alpha(3), beta(3), gamma(1), delta(1), epsilon(1). CF(0) has three main subunits: a(1), b(2) and c(9-12). The alpha and beta chains form an alternating ring which encloses part of the gamma chain. CF(1) is attached to CF(0) by a central stalk formed by the gamma and epsilon chains, while a peripheral stalk is formed by the delta and b chains.

It is found in the cell membrane. The enzyme catalyses ATP + H2O + 4 H(+)(in) = ADP + phosphate + 5 H(+)(out). Produces ATP from ADP in the presence of a proton gradient across the membrane. The alpha chain is a regulatory subunit. In Mycolicibacterium smegmatis (strain ATCC 700084 / mc(2)155) (Mycobacterium smegmatis), this protein is ATP synthase subunit alpha.